The sequence spans 254 residues: Winged helix repair factor 1 (254 aa).

A Bipartite nuclear localization signal motif is present at residues 4-21 (KRRLLASEAFGVKRRRAP). Winged helix domain stretches follow at residues 32-104 (RAGS…GIVF), 120-179 (PCAG…LAVP), and 180-254 (GAGR…LPDT).

This sequence belongs to the STK19 family. In terms of assembly, monomer in solution. Homodimer; when bound to DNA. Component of a transcription-coupled nucleotide excision repair (TC-NER) complex composed of STK19, ERCC6, ERCC8, DDA1, DDB1, ELOF1 and UVSSA which assembles and interacts with the multiprotein RNA polymerase II complex when it stalls at DNA lesions.

It localises to the nucleus. Its function is as follows. DNA-binding protein which is required for efficient transcription-coupled nucleotide excision repair (TC-NER). Acts as part of a TC-NER complex which assembles and interacts with RNA polymerase II (RNAPII) when it stalls at DNA lesions. TC-NER complex subunit UVSSA binds to the GTF2H1/p62 subunit of the TFIIH transcription factor complex, tethering TFIIH to the TC-NER complex. WHR1/STK19 then interacts with the XPD helicase subunit of TFIIH which guides TFIIH to DNA downstream of the stalled RNAPII, ensuring DNA repair. Directly interacts with RNAPII and also binds to downstream DNA. Promotes the timely removal of DNA damage-stalled RNAPII, allowing downstream NER factors to access DNA lesions. Required for monoubiquitination of UVSSA. Regulates repositioning and stabilization of UVSSA within the TC-NER complex. Stimulates ubiquitination of RNAPII complex member RBP1. Also binds to RNA and regulates the expression levels of many mRNAs. In Mus musculus (Mouse), this protein is Winged helix repair factor 1.